The sequence spans 490 residues: MENGSGKVLKPMDSEQLREYGHLMVDFIADYYKTIEDFPVLSQVQPGYLHKLLPDSAPDHPETLDQVLDDVRAKILPGVTHWQSPSFFAYYPSNSSVAGFLGEMLSAGLGIVGFSWVTSPAATELEMIVLDWVAKLLNLPEQFMSKGNGGGVIQGSASEAVLVVLIAARDKVLRSVGKNALEKLVVYSSDQTHSALQKACQIAGIHPENCRVLTTDSSTNYALRPESLQEAVSRDLEAGLIPFFLCANVGTTSSTAVDPLAALGKIANSNGIWFHVDAAYAGSACICPEYRQYIDGVETADSFNMNAHKWFLTNFDCSLLWVKDQDSLTLALSTNPEFLKNKASQANLVVDYKDWQIPLGRRFRSLKLWMVLRLYGSETLKSYIRNHIKLAKEFEQLVSQDPNFEIVTPRIFALVCFRLVPVKDEEKKCNNRNRELLDAVNSSGKLFMSHTALSGKIVLRCAIGAPLTEEKHVKEAWKIIQEEASYLLHK.

L-phenylalanine contacts are provided by Pro92, His193, and His308. Residue Lys309 is modified to N6-(pyridoxal phosphate)lysine. Phe338 contributes to the L-phenylalanine binding site.

This sequence belongs to the group II decarboxylase family. In terms of assembly, homodimer. Pyridoxal 5'-phosphate is required as a cofactor. In terms of tissue distribution, expressed in roots, rosette leaves, stems, cauline leaves and flowers.

The catalysed reaction is L-phenylalanine + O2 + H2O + H(+) = 2-phenylacetaldehyde + H2O2 + NH4(+) + CO2. The enzyme catalyses L-dopa + O2 + H2O + H(+) = 3,4-dihydroxyphenylacetaldehyde + H2O2 + NH4(+) + CO2. Functionally, bifunctional enzyme that catalyzes the decarboxylation of L-phenylalanine to 2-phenylethylamine, which is then oxidized to form 2-phenylacetaldehyde, a constituent of floral scent. 2-phenylacetaldehyde is a precursor of 2-phenylethanol, another constituent of floral scent. Catalyzes both the decarboxylation and deamination of L-dopa to 3,4-dihydroxylphenylacetaldehyde (DHPAA). The chain is Phenylacetaldehyde synthase from Arabidopsis thaliana (Mouse-ear cress).